The sequence spans 382 residues: Dual-specificity RNA methyltransferase RlmN (382 aa).

The active-site Proton acceptor is the glutamate 95. The Radical SAM core domain occupies 101 to 348; that stretch reads EDDRGTLCIS…TTVRKTRGDD (248 aa). Cysteine 108 and cysteine 353 are disulfide-bonded. [4Fe-4S] cluster is bound by residues cysteine 115, cysteine 119, and cysteine 122. S-adenosyl-L-methionine-binding positions include 179–180, serine 211, 233–235, and asparagine 310; these read GE and SLH. Cysteine 353 functions as the S-methylcysteine intermediate in the catalytic mechanism.

It belongs to the radical SAM superfamily. RlmN family. Requires [4Fe-4S] cluster as cofactor.

Its subcellular location is the cytoplasm. The enzyme catalyses adenosine(2503) in 23S rRNA + 2 reduced [2Fe-2S]-[ferredoxin] + 2 S-adenosyl-L-methionine = 2-methyladenosine(2503) in 23S rRNA + 5'-deoxyadenosine + L-methionine + 2 oxidized [2Fe-2S]-[ferredoxin] + S-adenosyl-L-homocysteine. The catalysed reaction is adenosine(37) in tRNA + 2 reduced [2Fe-2S]-[ferredoxin] + 2 S-adenosyl-L-methionine = 2-methyladenosine(37) in tRNA + 5'-deoxyadenosine + L-methionine + 2 oxidized [2Fe-2S]-[ferredoxin] + S-adenosyl-L-homocysteine. Functionally, specifically methylates position 2 of adenine 2503 in 23S rRNA and position 2 of adenine 37 in tRNAs. m2A2503 modification seems to play a crucial role in the proofreading step occurring at the peptidyl transferase center and thus would serve to optimize ribosomal fidelity. The protein is Dual-specificity RNA methyltransferase RlmN of Bordetella pertussis (strain Tohama I / ATCC BAA-589 / NCTC 13251).